A 213-amino-acid chain; its full sequence is PRA1 family protein B2 (213 aa).

Residues 1 to 21 (MSSSPAILPVTNQQAATQSQP) form a disordered region. Transmembrane regions (helical) follow at residues 75 to 94 (LAYF…AFSL), 98 to 117 (PFSL…LYLF), 137 to 157 (LLGL…GSLL), 161 to 181 (LTIG…DDLF), and 190 to 210 (AGLL…SVVA).

Belongs to the PRA1 family. As to quaternary structure, interacts with PRA1B1, PRA1B3, PRA1B4, PRA1B5, PRA1B6 and PRA1E.

It is found in the endosome membrane. Its function is as follows. May be involved in both secretory and endocytic intracellular trafficking in the endosomal/prevacuolar compartments. This Arabidopsis thaliana (Mouse-ear cress) protein is PRA1 family protein B2 (PRA1B2).